Here is a 272-residue protein sequence, read N- to C-terminus: F-actin-capping protein subunit beta (272 aa).

Belongs to the F-actin-capping protein beta subunit family. Component of the F-actin capping complex, composed of a heterodimer of an alpha and a beta subunit.

The protein resides in the cytoplasm. It is found in the cytoskeleton. F-actin-capping proteins bind in a Ca(2+)-independent manner to the fast growing ends of actin filaments (barbed end) thereby blocking the exchange of subunits at these ends. Unlike other capping proteins (such as gelsolin and severin), these proteins do not sever actin filaments. In Dictyostelium discoideum (Social amoeba), this protein is F-actin-capping protein subunit beta (acpA).